The following is a 493-amino-acid chain: Guanosine-5'-triphosphate,3'-diphosphate pyrophosphatase (493 aa).

This sequence belongs to the GppA/Ppx family. GppA subfamily.

It catalyses the reaction guanosine 3'-diphosphate 5'-triphosphate + H2O = guanosine 3',5'-bis(diphosphate) + phosphate + H(+). It participates in purine metabolism; ppGpp biosynthesis; ppGpp from GTP: step 2/2. Catalyzes the conversion of pppGpp to ppGpp. Guanosine pentaphosphate (pppGpp) is a cytoplasmic signaling molecule which together with ppGpp controls the 'stringent response', an adaptive process that allows bacteria to respond to amino acid starvation, resulting in the coordinated regulation of numerous cellular activities. The protein is Guanosine-5'-triphosphate,3'-diphosphate pyrophosphatase of Salmonella paratyphi A (strain ATCC 9150 / SARB42).